Consider the following 182-residue polypeptide: uncharacterized protein (182 aa).

This is an uncharacterized protein from Mycobacterium tuberculosis (strain CDC 1551 / Oshkosh).